The primary structure comprises 108 residues: MIKTTLLFFATALCEIIGCFLPWLWLKRNASIWLLLPAGISLALFVWLLTLHPAASGRVYAAYGGVYVCTALMWLRVVDGVKLTLYDWTGALIALCGMLIIVAGWGRT.

Topologically, residues 1-5 are periplasmic; it reads MIKTT. A helical membrane pass occupies residues 6 to 26; it reads LLFFATALCEIIGCFLPWLWL. Residues 27–30 lie on the Cytoplasmic side of the membrane; it reads KRNA. The helical transmembrane segment at 31 to 51 threads the bilayer; the sequence is SIWLLLPAGISLALFVWLLTL. Topologically, residues 52-60 are periplasmic; the sequence is HPAASGRVY. The helical transmembrane segment at 61–81 threads the bilayer; the sequence is AAYGGVYVCTALMWLRVVDGV. The Cytoplasmic segment spans residues 82-84; the sequence is KLT. A helical transmembrane segment spans residues 85 to 105; it reads LYDWTGALIALCGMLIIVAGW. At 106 to 108 the chain is on the periplasmic side; it reads GRT.

It belongs to the UPF0060 family.

It localises to the cell inner membrane. This chain is UPF0060 membrane protein YnfA, found in Escherichia coli O139:H28 (strain E24377A / ETEC).